The primary structure comprises 621 residues: TOX high mobility group box family member 4 (621 aa).

Disordered regions lie at residues 153 to 227 and 305 to 333; these read LGLS…QKPV and LDPA…ASIE. Position 176 is a phosphothreonine (threonine 176). 3 positions are modified to phosphoserine: serine 178, serine 181, and serine 182. The span at 183–193 shows a compositional bias: basic and acidic residues; that stretch reads LHEDGVEDFRR. The segment covering 208 to 218 has biased composition (basic residues); that stretch reads KQKAPKKRKKK. The short motif at 213-218 is the Nuclear localization signal element; that stretch reads KKRKKK. A DNA-binding region (HMG box) is located at residues 223 to 291; the sequence is PQKPVSAYAL…EYLKALAAYK (69 aa). Positions 307–319 are enriched in pro residues; the sequence is PAPPSQTPSPPPM. Threonine 313 carries the phosphothreonine modification. Phosphoserine is present on serine 315. Low complexity predominate over residues 320 to 333; that stretch reads ATVDPASPAPASIE. Residue arginine 481 is modified to Asymmetric dimethylarginine. The interval 510 to 529 is disordered; the sequence is PTVESSPERPMNNSPEAHTV. Serine 533, serine 550, serine 552, serine 560, serine 562, and serine 567 each carry phosphoserine.

Component of the PNUTS-PP1 phosphatase complex, composed of PPP1R10/PNUTS, TOX4, WDR82 and PPP1CA or PPP1CB or PPP1CC. Interacts with PPP1R10/PNUTS. Interacts with FOXO1 and CREB1 (increased by cAMP); FOXO1 and CREB1 are required for full induction of TOX4-dependent activity and the interactions are inhibited by insulin.

It is found in the nucleus. Its subcellular location is the chromosome. Its activity is regulated as follows. In liver, recruited to target gene promoters following treatment with dexamethasone and cAMP. Binding is decreased in presence of insulin. Functionally, transcription factor that modulates cell fate reprogramming from the somatic state to the pluripotent and neuronal fate. In liver, controls the expression of hormone-regulated gluconeogenic genes such as G6PC1 and PCK1. This regulation is independent of the insulin receptor activation. Also acts as a regulatory component of protein phosphatase 1 (PP1) complexes. Component of the PNUTS-PP1 protein phosphatase complex, a PP1 complex that regulates RNA polymerase II transcription pause-release. PNUTS-PP1 also plays a role in the control of chromatin structure and cell cycle progression during the transition from mitosis into interphase. The sequence is that of TOX high mobility group box family member 4 (TOX4) from Pongo abelii (Sumatran orangutan).